The sequence spans 279 residues: Acetyl-coenzyme A carboxylase carboxyl transferase subunit beta (279 aa).

Positions 23-279 (LWSKCDECGA…LIKLFKHLRG (257 aa)) constitute a CoA carboxyltransferase N-terminal domain. 4 residues coordinate Zn(2+): Cys27, Cys30, Cys46, and Cys49. Residues 27–49 (CDECGAALHKKQLEDHLYTCPEC) form a C4-type zinc finger.

This sequence belongs to the AccD/PCCB family. Acetyl-CoA carboxylase is a heterohexamer composed of biotin carboxyl carrier protein (AccB), biotin carboxylase (AccC) and two subunits each of ACCase subunit alpha (AccA) and ACCase subunit beta (AccD). The cofactor is Zn(2+).

Its subcellular location is the cytoplasm. The enzyme catalyses N(6)-carboxybiotinyl-L-lysyl-[protein] + acetyl-CoA = N(6)-biotinyl-L-lysyl-[protein] + malonyl-CoA. It participates in lipid metabolism; malonyl-CoA biosynthesis; malonyl-CoA from acetyl-CoA: step 1/1. In terms of biological role, component of the acetyl coenzyme A carboxylase (ACC) complex. Biotin carboxylase (BC) catalyzes the carboxylation of biotin on its carrier protein (BCCP) and then the CO(2) group is transferred by the transcarboxylase to acetyl-CoA to form malonyl-CoA. The sequence is that of Acetyl-coenzyme A carboxylase carboxyl transferase subunit beta from Chlorobaculum parvum (strain DSM 263 / NCIMB 8327) (Chlorobium vibrioforme subsp. thiosulfatophilum).